We begin with the raw amino-acid sequence, 156 residues long: ATP synthase subunit b (156 aa).

The chain crosses the membrane as a helical span at residues 7–29 (LIGQSITFIFFVWFSMKFVWPPI).

It belongs to the ATPase B chain family. In terms of assembly, F-type ATPases have 2 components, F(1) - the catalytic core - and F(0) - the membrane proton channel. F(1) has five subunits: alpha(3), beta(3), gamma(1), delta(1), epsilon(1). F(0) has three main subunits: a(1), b(2) and c(10-14). The alpha and beta chains form an alternating ring which encloses part of the gamma chain. F(1) is attached to F(0) by a central stalk formed by the gamma and epsilon chains, while a peripheral stalk is formed by the delta and b chains.

It localises to the cell inner membrane. F(1)F(0) ATP synthase produces ATP from ADP in the presence of a proton or sodium gradient. F-type ATPases consist of two structural domains, F(1) containing the extramembraneous catalytic core and F(0) containing the membrane proton channel, linked together by a central stalk and a peripheral stalk. During catalysis, ATP synthesis in the catalytic domain of F(1) is coupled via a rotary mechanism of the central stalk subunits to proton translocation. Functionally, component of the F(0) channel, it forms part of the peripheral stalk, linking F(1) to F(0). This is ATP synthase subunit b from Thiobacillus denitrificans (strain ATCC 25259 / T1).